The sequence spans 500 residues: Lysine--tRNA ligase (500 aa).

Residues E410 and E417 each coordinate Mg(2+).

It belongs to the class-II aminoacyl-tRNA synthetase family. Homodimer. It depends on Mg(2+) as a cofactor.

Its subcellular location is the cytoplasm. It carries out the reaction tRNA(Lys) + L-lysine + ATP = L-lysyl-tRNA(Lys) + AMP + diphosphate. The sequence is that of Lysine--tRNA ligase from Mycoplasma mycoides subsp. mycoides SC (strain CCUG 32753 / NCTC 10114 / PG1).